The primary structure comprises 927 residues: Transmembrane protein 132 homolog (927 aa).

The first 18 residues, 1–18 (MLKKLWICISCIVTTALS), serve as a signal peptide directing secretion. The chain crosses the membrane as a helical span at residues 749–769 (FHIFVLTIIGLIILFLFISFV). A disordered region spans residues 789–842 (LSSSSGSNSRQEETNEWVWLSQPQPPSSTISSGYSGNKSTAERQSSNGDDPSRT). The span at 817-842 (TISSGYSGNKSTAERQSSNGDDPSRT) shows a compositional bias: polar residues.

It belongs to the TMEM132 family. In terms of assembly, interacts with gex-3. As to expression, specifically expressed in neurons.

The protein resides in the membrane. Regulates neuronal morphology via inhibition of the WAVE regulatory complex (WCR), a complex that controls F-actin cytoskeletal dynamics. The polypeptide is Transmembrane protein 132 homolog (Caenorhabditis elegans).